The primary structure comprises 522 residues: Type-2 serine--tRNA ligase (522 aa).

Residue Ala319 coordinates L-serine. Cys321 is a Zn(2+) binding site. Arg350 provides a ligand contact to L-serine. Residues 350-352 and 361-362 each bind ATP; these read RWE and RV. An L-serine-binding site is contributed by 367–369; it reads RIE. Zn(2+) is bound by residues Glu369 and Cys476. Arg483 serves as a coordination point for ATP.

The protein belongs to the class-II aminoacyl-tRNA synthetase family. Type-2 seryl-tRNA synthetase subfamily. Homodimer. It depends on Zn(2+) as a cofactor.

Its subcellular location is the cytoplasm. The catalysed reaction is tRNA(Ser) + L-serine + ATP = L-seryl-tRNA(Ser) + AMP + diphosphate + H(+). It carries out the reaction tRNA(Sec) + L-serine + ATP = L-seryl-tRNA(Sec) + AMP + diphosphate + H(+). Its pathway is aminoacyl-tRNA biosynthesis; selenocysteinyl-tRNA(Sec) biosynthesis; L-seryl-tRNA(Sec) from L-serine and tRNA(Sec): step 1/1. Functionally, catalyzes the attachment of serine to tRNA(Ser). Is also able to aminoacylate tRNA(Sec) with serine, to form the misacylated tRNA L-seryl-tRNA(Sec), which will be further converted into selenocysteinyl-tRNA(Sec). This is Type-2 serine--tRNA ligase (serS) from Methanococcus aeolicus (strain ATCC BAA-1280 / DSM 17508 / OCM 812 / Nankai-3).